The primary structure comprises 1164 residues: Nuclear exosome regulator NRDE2 (1164 aa).

Disordered stretches follow at residues 1-25 (MALF…ELDW) and 39-149 (LSQQ…GHRF). Ala2 is modified (N-acetylalanine). Over residues 61-73 (LKSESSDESDTNK) the composition is skewed to basic and acidic residues. Residues 61 to 383 (LKSESSDESD…IESNQSSVDL (323 aa)) are a coiled coil. Positions 74–103 (KLKQTSRKKKKEKKKKRKHQHHKKTKRKHG) are enriched in basic residues. The segment covering 110–133 (SETDTDSEKDKPSRGVGGSKKESE) has biased composition (basic and acidic residues). The segment at 163 to 266 (FRTDKKPDPA…KDLEDAAPVT (104 aa)) is MID/MTR4-interacting domain. The segment at 279–305 (TTHWLQGQGPPEQESKQPDAQPDSESA) is disordered. 5 HAT repeats span residues 305–337 (AALK…FQDE), 395–427 (WEPS…FCQS), 758–792 (SQGK…LEWL), 978–1010 (YPLA…IQNK), and 1067–1101 (GLMH…FLVS).

This sequence belongs to the NRDE2 family. Interacts with MTREX; the interaction is direct and stabilizes NRDE2. Interacts with EXOSC10, EFTUD2 and EIF4A3.

It is found in the nucleus speckle. Its subcellular location is the nucleus. The protein localises to the nucleolus. The protein resides in the nucleoplasm. Protein of the nuclear speckles that regulates RNA degradation and export from the nucleus through its interaction with MTREX an essential factor directing various RNAs to exosomal degradation. Changes the conformation of MTREX, precluding its association with the nuclear exosome and interaction with proteins required for its function in RNA exosomal degradation. Negatively regulates, for instance, the degradation of mRNAs and lncRNAs by inhibiting their MTREX-mediated recruitment to nuclear exosome. By preventing the degradation of RNAs in the nucleus, it promotes their export to the cytoplasm. U5 snRNP-associated RNA splicing factor which is required for efficient splicing of CEP131 pre-mRNA and plays an important role in centrosome maturation, integrity and function during mitosis. Suppresses intron retention in a subset of pre-mRNAs containing short, GC-rich introns with relatively weak 5' and 3' splice sites. Plays a role in DNA damage response. The sequence is that of Nuclear exosome regulator NRDE2 from Homo sapiens (Human).